A 215-amino-acid chain; its full sequence is Probable maleylacetoacetate isomerase (215 aa).

In terms of domain architecture, GST N-terminal spans Met2–Arg85. A GST C-terminal domain is found at Arg90–Cys215.

The protein belongs to the GST superfamily. Zeta family.

The catalysed reaction is 4-maleylacetoacetate = 4-fumarylacetoacetate. The protein operates within amino-acid degradation; L-phenylalanine degradation; acetoacetate and fumarate from L-phenylalanine: step 5/6. The protein is Probable maleylacetoacetate isomerase (maiA) of Vibrio cholerae serotype O1 (strain ATCC 39315 / El Tor Inaba N16961).